The primary structure comprises 426 residues: MFRTKRSALVRRLWRSRAPGGEDEEEGVGGGGGGGELRGEGATDGRAYGAGGGGAGRAGCCLGKAVRGAKGHHHPHPPTSGAGAAGGAEADLKALTHSVLKKLKERQLELLLQAVESRGGTRTACLLLPGRLDCRLGPGAPASAQPAQPPSSYSLPLLLCKVFRWPDLRHSSEVKRLCCCESYGKINPELVCCNPHHLSRLCELESPPPPYSRYPMDFLKPTAGCPDAVPSSAETGGTNYLAPGGLSDSQLLLEPGDRSHWCVVAYWEEKTRVGRLYCVQEPSLDIFYDLPQGNGFCLGQLNSDNKSQLVQKVRSKIGCGIQLTREVDGVWVYNRSSYPIFIKSATLDNPDSRTLLVHKVFPGFSIKAFDYEKAYSLQRPNDHEFMQQPWTGFTVQISFVKGWGQCYTRQFISSCPCWLEVIFNSR.

A disordered region spans residues 14-42 (WRSRAPGGEDEEEGVGGGGGGGELRGEGA). An N6-acetyllysine; alternate mark is found at Lys-64 and Lys-70. Residues Lys-64 and Lys-70 each participate in a glycyl lysine isopeptide (Lys-Gly) (interchain with G-Cter in ubiquitin); alternate cross-link. The MH1 domain occupies 64 to 207 (KAVRGAKGHH…LSRLCELESP (144 aa)). Positions 67-76 (RGAKGHHHPH) are enriched in basic residues. The segment at 67–87 (RGAKGHHHPHPPTSGAGAAGG) is disordered. 4 residues coordinate Zn(2+): Cys-125, Cys-180, Cys-192, and His-197. A PY-motif motif is present at residues 208 to 211 (PPPY). The tract at residues 208–217 (PPPYSRYPMD) is important for interaction with SMURF2. A Phosphoserine modification is found at Ser-249. One can recognise an MH2 domain in the interval 261–426 (WCVVAYWEEK…CWLEVIFNSR (166 aa)).

It belongs to the dwarfin/SMAD family. As to quaternary structure, interacts with COPS5. Interacts with STAMBP. Interacts with PPP1R15A. Interacts with NEDD4L. Interacts with RNF111, AXIN1 and AXIN2. Interacts with ACVR1B, SMURF1, SMURF2 and TGFBR1; SMAD7 recruits SMURF1 and SMURF2 to the TGF-beta receptor and regulates its degradation. Interacts with WWP1. Interacts with PDPK1 (via PH domain). Ubiquitinated by WWP1. Interacts with TSC22D1/TSC-22; the interaction requires TGF-beta and the interaction is inhibited by TGFBR1. Phosphorylation on Ser-249 does not affect its stability, nuclear localization or inhibitory function in TGFB signaling; however it affects its ability to regulate transcription. Phosphorylated by PDPK1. In terms of processing, ubiquitinated by WWP1. Polyubiquitinated by RNF111, which is enhanced by AXIN1 and promotes proteasomal degradation. In response to TGF-beta, ubiquitinated by SMURF1; which promotes its degradation. Ubiquitinated by ARK2C, promoting proteasomal degradation, leading to enhance the BMP-Smad signaling. Post-translationally, acetylation prevents ubiquitination and degradation mediated by SMURF1. As to expression, ubiquitous in various organs, with higher levels in brain and kidney.

It localises to the nucleus. The protein localises to the cytoplasm. Functionally, antagonist of signaling by TGF-beta (transforming growth factor) type 1 receptor superfamily members; has been shown to inhibit TGF-beta (Transforming growth factor) and activin signaling by associating with their receptors thus preventing SMAD2 access. Functions as an adapter to recruit SMURF2 to the TGF-beta receptor complex. Also acts by recruiting the PPP1R15A-PP1 complex to TGFBR1, which promotes its dephosphorylation. Positively regulates PDPK1 kinase activity by stimulating its dissociation from the 14-3-3 protein YWHAQ which acts as a negative regulator. This is Mothers against decapentaplegic homolog 7 (Smad7) from Mus musculus (Mouse).